The sequence spans 68 residues: uncharacterized protein (68 aa).

This is an uncharacterized protein from Archaeoglobus fulgidus (strain ATCC 49558 / DSM 4304 / JCM 9628 / NBRC 100126 / VC-16).